The sequence spans 331 residues: Phosphoribosylformylglycinamidine cyclo-ligase (331 aa).

This sequence belongs to the AIR synthase family.

The protein resides in the cytoplasm. The enzyme catalyses 2-formamido-N(1)-(5-O-phospho-beta-D-ribosyl)acetamidine + ATP = 5-amino-1-(5-phospho-beta-D-ribosyl)imidazole + ADP + phosphate + H(+). The protein operates within purine metabolism; IMP biosynthesis via de novo pathway; 5-amino-1-(5-phospho-D-ribosyl)imidazole from N(2)-formyl-N(1)-(5-phospho-D-ribosyl)glycinamide: step 2/2. This chain is Phosphoribosylformylglycinamidine cyclo-ligase, found in Clostridium botulinum (strain ATCC 19397 / Type A).